Consider the following 185-residue polypeptide: MTEPADDLVFIAAIAGAHGVRGECKVKSFAGNPADAFKYGAFLDIDGKTILTPKAARPVKDGFVVRFAEPLDRDKAQALKGTKLHVLRSALPELEEDEFYHSDLLGLKVQGLDGAPMGTLKAVHNFGSGDLLEITGTPDRNGSWMLPFTREFVPHVSIAEGVITIDPPEDVGSKAEEEGGGAPDD.

The region spanning 96–171 (EDEFYHSDLL…VITIDPPEDV (76 aa)) is the PRC barrel domain. A disordered region spans residues 165–185 (IDPPEDVGSKAEEEGGGAPDD).

The protein belongs to the RimM family. As to quaternary structure, binds ribosomal protein uS19.

The protein resides in the cytoplasm. Functionally, an accessory protein needed during the final step in the assembly of 30S ribosomal subunit, possibly for assembly of the head region. Essential for efficient processing of 16S rRNA. May be needed both before and after RbfA during the maturation of 16S rRNA. It has affinity for free ribosomal 30S subunits but not for 70S ribosomes. In Maricaulis maris (strain MCS10) (Caulobacter maris), this protein is Ribosome maturation factor RimM.